Consider the following 368-residue polypeptide: DNA replication and repair protein RecF (368 aa).

Residue 30-37 (GDNGAGKT) participates in ATP binding.

This sequence belongs to the RecF family.

It localises to the cytoplasm. Functionally, the RecF protein is involved in DNA metabolism; it is required for DNA replication and normal SOS inducibility. RecF binds preferentially to single-stranded, linear DNA. It also seems to bind ATP. The polypeptide is DNA replication and repair protein RecF (Xanthomonas axonopodis pv. citri (strain 306)).